A 417-amino-acid polypeptide reads, in one-letter code: Probable histone-binding protein lin-53 (417 aa).

6 WD repeats span residues 118–158 (NHEG…AVPR), 170–210 (GHTK…NVAG), 220–260 (GHES…PGHC), 263–303 (AHSA…MKLH), 307–347 (SHRD…EDQS), and 364–404 (GHTA…YNEV).

Belongs to the WD repeat RBAP46/RBAP48/MSI1 family. In terms of assembly, binds directly to helix 1 of the histone fold of histone H4, a region that is not accessible when H4 is in chromatin. Probable component of a NuRD-like complex, composed of at least lin-53 and hda-1. Interacts with lin-35. Interacts with hda-1; the interaction is direct. Component of the DRM complex, at least composed of lin-9, lin-35, lin-37, lin-52, lin-53, lin-54- dpl-1 and efl-1. Interacts with hcp-3.

It localises to the nucleus. The protein localises to the chromosome. The protein resides in the centromere. Its function is as follows. Core histone-binding subunit that may target chromatin assembly factors, chromatin remodeling factors and histone deacetylases to their histone substrates in a manner that is regulated by nucleosomal DNA. Required for hcp-3 and his-1 stabilization, localization of hcp-3 to centromeres and for proper chromosome segregation. Synthetic multivulva class B (synMuvB) protein. SynMuvB proteins are required to repress the induction of vulval development by Ras signaling and probably act by forming the multiprotein DRM complex that represses transcription. The chain is Probable histone-binding protein lin-53 from Caenorhabditis elegans.